The chain runs to 31 residues: Cyclotide mra3 (31 aa).

3 cysteine pairs are disulfide-bonded: cysteine 5/cysteine 21, cysteine 9/cysteine 23, and cysteine 14/cysteine 28.

Post-translationally, this is a cyclic peptide. In terms of processing, contains 3 disulfide bonds.

Functionally, probably participates in a plant defense mechanism. The polypeptide is Cyclotide mra3 (Melicytus ramiflorus (Whitey wood)).